A 598-amino-acid polypeptide reads, in one-letter code: Transcription factor COE3 (598 aa).

The tract at residues 1 to 23 (MFGIQENIPRGGTTMKEEPLGGG) is disordered. The interval 63-66 (RKSN) is interaction with DNA. Residues 151 to 170 (CRVLLTHEIMCSRCCDKKSC) form a C5-type zinc finger. 2 interaction with DNA regions span residues 197–204 (NCLKNAGN) and 236–239 (NNSK). Positions 264 to 347 (PCIKAISPSE…KGAPGRFVYT (84 aa)) constitute an IPT/TIG domain. A disordered region spans residues 452 to 483 (TSQANDQVGYSRNTSSVSPRGYVPSSTPQQSN).

Belongs to the COE family. As to quaternary structure, forms either a homodimer or a heterodimer with a related family member.

The protein resides in the nucleus. Acts as a transcriptional activator. The chain is Transcription factor COE3 (coe3) from Xenopus laevis (African clawed frog).